Here is a 392-residue protein sequence, read N- to C-terminus: Protein O-glucosyltransferase 1 (392 aa).

Positions 1–23 are cleaved as a signal peptide; sequence MERRAGSRLRAWMLLLLLCPVQG. Intrachain disulfides connect Cys-49-Cys-56, Cys-54-Cys-357, Cys-102-Cys-108, and Cys-263-Cys-286. Asn-53 carries N-linked (GlcNAc...) asparagine glycosylation. The interval 103–107 is interaction with the consensus sequence C-X-S-X-[PA]-C in peptide substrates; the sequence is MFPSR. Asp-133 serves as the catalytic Proton donor/acceptor. Residues 172–178 are interaction with the consensus sequence C-X-S-X-[PA]-C in peptide substrates; that stretch reads AVWPLYP. Position 177 (Tyr-177) interacts with UDP-alpha-D-glucose. Asn-204 carries N-linked (GlcNAc...) asparagine glycosylation. Residues Ser-212, Arg-218, and 274–279 contribute to the UDP-alpha-D-glucose site; that span reads VAASFR. Asn-373 carries an N-linked (GlcNAc...) asparagine glycan. Positions 389-392 match the Prevents secretion from ER motif; sequence KTEL.

This sequence belongs to the glycosyltransferase 90 family. As to expression, widely expressed in newborn and adult tissues (at protein level).

The protein resides in the endoplasmic reticulum lumen. It catalyses the reaction L-seryl-[EGF-like domain protein] + UDP-alpha-D-xylose = 3-O-(beta-D-xylosyl)-L-seryl-[EGF-like domain protein] + UDP + H(+). It carries out the reaction L-seryl-[EGF-like domain protein] + UDP-alpha-D-glucose = 3-O-(beta-D-glucosyl)-L-seryl-[EGF-like domain protein] + UDP + H(+). Its pathway is protein modification; protein glycosylation. Its function is as follows. Dual specificity glycosyltransferase that catalyzes the transfer of glucose and xylose from UDP-glucose and UDP-xylose, respectively, to a serine residue found in the consensus sequence of C-X-S-X-P-C. Specifically targets extracellular EGF repeats of protein such as CRB2, F7, F9 and NOTCH2. Acts as a positive regulator of Notch signaling by mediating O-glucosylation of Notch, leading to regulate muscle development. Notch glucosylation does not affect Notch ligand binding. Required during early development to promote gastrulation: acts by mediating O-glucosylation of CRB2, which is required for CRB2 localization to the cell membrane. This chain is Protein O-glucosyltransferase 1, found in Mus musculus (Mouse).